Here is a 368-residue protein sequence, read N- to C-terminus: DNA replication and repair protein RecF (368 aa).

30-37 (GNNAQGKT) is an ATP binding site.

It belongs to the RecF family.

It is found in the cytoplasm. Functionally, the RecF protein is involved in DNA metabolism; it is required for DNA replication and normal SOS inducibility. RecF binds preferentially to single-stranded, linear DNA. It also seems to bind ATP. This chain is DNA replication and repair protein RecF, found in Streptococcus pyogenes serotype M4 (strain MGAS10750).